A 195-amino-acid polypeptide reads, in one-letter code: Probable thymidylate kinase (195 aa).

7-14 contacts ATP; the sequence is GIDGVGKT.

The protein belongs to the thymidylate kinase family.

The catalysed reaction is dTMP + ATP = dTDP + ADP. The polypeptide is Probable thymidylate kinase (Methanosphaera stadtmanae (strain ATCC 43021 / DSM 3091 / JCM 11832 / MCB-3)).